Here is a 253-residue protein sequence, read N- to C-terminus: Trans-aconitate 2-methyltransferase (253 aa).

It belongs to the methyltransferase superfamily. Tam family.

It localises to the cytoplasm. It carries out the reaction trans-aconitate + S-adenosyl-L-methionine = (E)-3-(methoxycarbonyl)pent-2-enedioate + S-adenosyl-L-homocysteine. In terms of biological role, catalyzes the S-adenosylmethionine monomethyl esterification of trans-aconitate. The sequence is that of Trans-aconitate 2-methyltransferase from Klebsiella pneumoniae (strain 342).